The sequence spans 217 residues: Fucoxanthin-chlorophyll a-c binding protein B, chloroplastic (217 aa).

The N-terminal 39 residues, 1 to 39 (MKSAVMAVACAAAPGFRGPSAFNGAALTTSAKACSAMKM), are a transit peptide targeting the chloroplast. Transmembrane regions (helical) follow at residues 81–101 (IAMLAIAGHLTQQNTRLPGML), 122–142 (IPPAGLAQIFAFIGFLELAVM), and 183–203 (GRAAQMGILALMVHEELNNKP).

This sequence belongs to the fucoxanthin chlorophyll protein family. As to quaternary structure, the LHC complex of chromophytic algae is composed of fucoxanthin, chlorophyll A and C bound non-covalently by fucoxanthin chlorophyll proteins (FCPs). The ratio of pigments in this LHC is; fucoxanthin: chlorophyll C: chlorophyll A; (0.6-1): (0.1-0.3): (1).

The protein resides in the plastid. It localises to the chloroplast thylakoid membrane. Functionally, the light-harvesting complex (LHC) functions as a light receptor, it captures and delivers excitation energy to photosystems with which it is closely associated. Energy is transferred from the carotenoid and chlorophyll C (or B) to chlorophyll A and the photosynthetic reaction centers where it is used to synthesize ATP and reducing power. The chain is Fucoxanthin-chlorophyll a-c binding protein B, chloroplastic (FCPB) from Macrocystis pyrifera (Giant kelp).